The chain runs to 318 residues: Aldo-keto reductase family 1 member C21 (318 aa).

20–24 (GFGTA) lines the NADP(+) pocket. Position 31 (K31) interacts with substrate. D50 contacts NADP(+). The active-site Proton donor is the Y55. Substrate is bound at residue H117. NADP(+) contacts are provided by residues 166–167 (SN), Q190, 216–224 (YGVLGTQRY), and 270–280 (TSLKEERIKEN).

The protein belongs to the aldo/keto reductase family. In terms of assembly, monomer.

It is found in the cytoplasm. The enzyme catalyses androsterone + NADP(+) = 5alpha-androstan-3,17-dione + NADPH + H(+). It catalyses the reaction androsterone + NAD(+) = 5alpha-androstan-3,17-dione + NADH + H(+). In terms of biological role, NADP-dependent 17-alpha-hydroxysteroid dehydrogenase that converts 5-alpha-androstane-3,17-dione into androsterone. Has lower 3-alpha-hydroxysteroid dehydrogenase activity. Has broad substrate specificity and acts on various 17-alpha-hydroxysteroids, 17-ketosteroids, 3-alpha hydroxysteroids and 3-ketosteroids. Reduction of keto groups is strictly stereoselective. Reduction of 17-ketosteroids yields only 17-alpha-hydroxysteroids. Likewise, reduction of 3-ketosteroids yields only 3-alpha-hydroxysteroids. This is Aldo-keto reductase family 1 member C21 (Akr1c21) from Rattus norvegicus (Rat).